The sequence spans 375 residues: Peritrophin-48 (375 aa).

Residues M1–A20 form the signal peptide. 5 Chitin-binding type-2 domains span residues A25–L83, D86–D143, L153–R210, E224–R292, and E294–N360. C60 and C73 are disulfide-bonded. N117 carries an N-linked (GlcNAc...) asparagine glycan. 4 cysteine pairs are disulfide-bonded: C120/C133, C187/C200, C265/C278, and C330/C343. N360 carries an N-linked (GlcNAc...) asparagine glycan.

Post-translationally, glycosylated. Cardia and midgut peritrophic membrane.

Its function is as follows. May bind chitin or related oligosaccharide structures. The protein is Peritrophin-48 of Lucilia cuprina (Green bottle fly).